A 266-amino-acid polypeptide reads, in one-letter code: Ribosomal RNA small subunit methyltransferase A (266 aa).

S-adenosyl-L-methionine contacts are provided by Asn-16, Leu-18, Gly-43, Glu-64, Asp-89, and Asn-110.

This sequence belongs to the class I-like SAM-binding methyltransferase superfamily. rRNA adenine N(6)-methyltransferase family. RsmA subfamily.

Its subcellular location is the cytoplasm. The catalysed reaction is adenosine(1518)/adenosine(1519) in 16S rRNA + 4 S-adenosyl-L-methionine = N(6)-dimethyladenosine(1518)/N(6)-dimethyladenosine(1519) in 16S rRNA + 4 S-adenosyl-L-homocysteine + 4 H(+). In terms of biological role, specifically dimethylates two adjacent adenosines (A1518 and A1519) in the loop of a conserved hairpin near the 3'-end of 16S rRNA in the 30S particle. May play a critical role in biogenesis of 30S subunits. The sequence is that of Ribosomal RNA small subunit methyltransferase A from Marinomonas sp. (strain MWYL1).